Here is a 493-residue protein sequence, read N- to C-terminus: Glutamyl-tRNA(Gln) amidotransferase subunit A (493 aa).

Active-site charge relay system residues include K78 and S158. The active-site Acyl-ester intermediate is the S182.

Belongs to the amidase family. GatA subfamily. Heterotrimer of A, B and C subunits.

It carries out the reaction L-glutamyl-tRNA(Gln) + L-glutamine + ATP + H2O = L-glutaminyl-tRNA(Gln) + L-glutamate + ADP + phosphate + H(+). Its function is as follows. Allows the formation of correctly charged Gln-tRNA(Gln) through the transamidation of misacylated Glu-tRNA(Gln) in organisms which lack glutaminyl-tRNA synthetase. The reaction takes place in the presence of glutamine and ATP through an activated gamma-phospho-Glu-tRNA(Gln). The protein is Glutamyl-tRNA(Gln) amidotransferase subunit A of Methylocella silvestris (strain DSM 15510 / CIP 108128 / LMG 27833 / NCIMB 13906 / BL2).